A 582-amino-acid chain; its full sequence is Aspartate--tRNA ligase (582 aa).

Residue E174 coordinates L-aspartate. The tract at residues 198–201 (QITK) is aspartate. Residue R220 coordinates L-aspartate. ATP is bound by residues 220 to 222 (RDE) and Q229. H443 provides a ligand contact to L-aspartate. Residue E477 participates in ATP binding. R484 lines the L-aspartate pocket. 529-532 (GLDR) serves as a coordination point for ATP.

It belongs to the class-II aminoacyl-tRNA synthetase family. Type 1 subfamily. As to quaternary structure, homodimer.

Its subcellular location is the cytoplasm. It catalyses the reaction tRNA(Asp) + L-aspartate + ATP = L-aspartyl-tRNA(Asp) + AMP + diphosphate. In terms of biological role, catalyzes the attachment of L-aspartate to tRNA(Asp) in a two-step reaction: L-aspartate is first activated by ATP to form Asp-AMP and then transferred to the acceptor end of tRNA(Asp). The protein is Aspartate--tRNA ligase of Streptococcus pyogenes serotype M28 (strain MGAS6180).